We begin with the raw amino-acid sequence, 786 residues long: Keratin, type I cytoskeletal 9 (786 aa).

Residues 1–21 (MNCRQFLSSHCSRDSSGGGGG) form a disordered region. The head stretch occupies residues 1–136 (MNCRQFLSSH…SGAGGILGAD (136 aa)). Residue Ser52 is modified to Phosphoserine. Positions 137–172 (EKTTMQDLNSRLASYLDKVQALEDANKELESKIREW) are coil 1A. One can recognise an IF rod domain in the interval 137-449 (EKTTMQDLNS…SLLEGGQEDF (313 aa)). A linker 1 region spans residues 173-191 (YDKQGSRTFHRDYSPYYDT). Residues 192–283 (IEDLKNQIVN…KNHEDEMSQL (92 aa)) form a coil 1B region. The linker 12 stretch occupies residues 284–306 (TGQNSGDVNVEMNAAPGRDLTKI). The tract at residues 307–445 (LNDMREEYER…KTYRSLLEGG (139 aa)) is coil 2. Positions 446 to 760 (QEDFESHESG…GGGSGSKGGS (315 aa)) are tail. A disordered region spans residues 447–786 (EDFESHESGQ…DDTQGYHIQY (340 aa)). Gly residues-rich tracts occupy residues 460-657 (GSGG…GGSG) and 664-761 (SSSG…GGSG). Positions 762 to 773 (RSSQVQSSSSKS) are enriched in low complexity.

Belongs to the intermediate filament family. In terms of assembly, heterotetramer of two type I and two type II keratins.

May serve an important special function either in the mature palmar and plantar skin tissue or in the morphogenetic program of the formation of these tissues. Plays a role in keratin filament assembly. The chain is Keratin, type I cytoskeletal 9 from Canis lupus familiaris (Dog).